The chain runs to 315 residues: Transaldolase (315 aa).

K128 acts as the Schiff-base intermediate with substrate in catalysis.

The protein belongs to the transaldolase family. Type 1 subfamily. Homodimer.

Its subcellular location is the cytoplasm. It catalyses the reaction D-sedoheptulose 7-phosphate + D-glyceraldehyde 3-phosphate = D-erythrose 4-phosphate + beta-D-fructose 6-phosphate. It functions in the pathway carbohydrate degradation; pentose phosphate pathway; D-glyceraldehyde 3-phosphate and beta-D-fructose 6-phosphate from D-ribose 5-phosphate and D-xylulose 5-phosphate (non-oxidative stage): step 2/3. In terms of biological role, transaldolase is important for the balance of metabolites in the pentose-phosphate pathway. The chain is Transaldolase from Opitutus terrae (strain DSM 11246 / JCM 15787 / PB90-1).